The chain runs to 141 residues: Large ribosomal subunit protein bL17 (141 aa).

It belongs to the bacterial ribosomal protein bL17 family. In terms of assembly, part of the 50S ribosomal subunit. Contacts protein L32.

The protein is Large ribosomal subunit protein bL17 of Gluconacetobacter diazotrophicus (strain ATCC 49037 / DSM 5601 / CCUG 37298 / CIP 103539 / LMG 7603 / PAl5).